The chain runs to 132 residues: Small ribosomal subunit protein uS8 (132 aa).

The protein belongs to the universal ribosomal protein uS8 family. In terms of assembly, part of the 30S ribosomal subunit. Contacts proteins S5 and S12.

Functionally, one of the primary rRNA binding proteins, it binds directly to 16S rRNA central domain where it helps coordinate assembly of the platform of the 30S subunit. In Lysinibacillus sphaericus (strain C3-41), this protein is Small ribosomal subunit protein uS8.